Reading from the N-terminus, the 272-residue chain is Small ribosomal subunit biogenesis GTPase RsgA (272 aa).

Positions 56-207 (KNILIRPKVA…IIDTPGFSSI (152 aa)) constitute a CP-type G domain. GTP-binding positions include 105–108 (TKAD) and 151–159 (GQSGVGKTT). Zn(2+) is bound by residues C230, C235, H237, and C245.

Belongs to the TRAFAC class YlqF/YawG GTPase family. RsgA subfamily. In terms of assembly, monomer. Associates with 30S ribosomal subunit, binds 16S rRNA. It depends on Zn(2+) as a cofactor.

The protein localises to the cytoplasm. Its function is as follows. One of several proteins that assist in the late maturation steps of the functional core of the 30S ribosomal subunit. Helps release RbfA from mature subunits. May play a role in the assembly of ribosomal proteins into the subunit. Circularly permuted GTPase that catalyzes slow GTP hydrolysis, GTPase activity is stimulated by the 30S ribosomal subunit. This Mycoplasmopsis pulmonis (strain UAB CTIP) (Mycoplasma pulmonis) protein is Small ribosomal subunit biogenesis GTPase RsgA.